Here is a 563-residue protein sequence, read N- to C-terminus: Cystathionine gamma-synthase 1, chloroplastic (563 aa).

The N-terminal 68 residues, 1–68 (MAVSSFQCPT…SRILRFPPNF (68 aa)), are a transit peptide targeting the chloroplast. Pyridoxal 5'-phosphate-binding residues include Tyr-226, Arg-228, Gly-256, Met-257, Tyr-281, Ser-376, and Thr-378. N6-(pyridoxal phosphate)lysine is present on Lys-379.

The protein belongs to the trans-sulfuration enzymes family. It depends on pyridoxal 5'-phosphate as a cofactor.

The protein localises to the plastid. It is found in the chloroplast. It catalyses the reaction O-phospho-L-homoserine + L-cysteine = L,L-cystathionine + phosphate. The catalysed reaction is O-succinyl-L-homoserine + L-cysteine = L,L-cystathionine + succinate + H(+). It functions in the pathway amino-acid biosynthesis; L-methionine biosynthesis via de novo pathway; L-cystathionine from O-succinyl-L-homoserine: step 1/1. With respect to regulation, inhibited by propargylglycine. Catalyzes the first committed step of methionine (Met) biosynthesis. Catalyzes the formation of L-cystathionine from homoserine esters and L-cysteine, via a gamma-replacement reaction. Substrate preference for cystathionine synthesis is O-phospho-L-homoserine (OPH) &gt; O(4)-succinyl-L-homoserine (OSH) &gt;&gt; O-acetyl-L-homoserine (OAH). Is able, at extremely low rate, to catalyze a gamma-elimination of OPH in the absence of cysteine to produce inorganic phosphate (Pi), 2-oxobutanoate and ammonia. The sequence is that of Cystathionine gamma-synthase 1, chloroplastic from Arabidopsis thaliana (Mouse-ear cress).